We begin with the raw amino-acid sequence, 445 residues long: Putative ATP-dependent RNA helicase L538 (445 aa).

A Helicase ATP-binding domain is found at 14 to 151 (IEFMKNNRGV…AVLVNIVRGE (138 aa)). Residue 27–34 (HSTGAGKT) coordinates ATP. Residues 101-104 (DEAH) carry the DEAH box motif. One can recognise a Helicase C-terminal domain in the interval 273–442 (KIEDIMKYII…VIDASIENNY (170 aa)).

This sequence belongs to the DEAD box helicase family. DEAH subfamily.

It is found in the virion. The enzyme catalyses ATP + H2O = ADP + phosphate + H(+). The sequence is that of Putative ATP-dependent RNA helicase L538 from Acanthamoeba polyphaga mimivirus (APMV).